The following is a 443-amino-acid chain: Tubulin beta-1/beta-2 chain (443 aa).

Residues Q11, E69, S138, G142, T143, G144, N204, and N226 each contribute to the GTP site. E69 provides a ligand contact to Mg(2+). Residues 424-443 (QYQDASAEEEGEFEGEEEEA) are disordered. A compositionally biased stretch (acidic residues) spans 429–443 (SAEEEGEFEGEEEEA).

This sequence belongs to the tubulin family. As to quaternary structure, dimer of alpha and beta chains. A typical microtubule is a hollow water-filled tube with an outer diameter of 25 nm and an inner diameter of 15 nM. Alpha-beta heterodimers associate head-to-tail to form protofilaments running lengthwise along the microtubule wall with the beta-tubulin subunit facing the microtubule plus end conferring a structural polarity. Microtubules usually have 13 protofilaments but different protofilament numbers can be found in some organisms and specialized cells. It depends on Mg(2+) as a cofactor.

It is found in the cytoplasm. Its subcellular location is the cytoskeleton. Its function is as follows. Tubulin is the major constituent of microtubules, a cylinder consisting of laterally associated linear protofilaments composed of alpha- and beta-tubulin heterodimers. Microtubules grow by the addition of GTP-tubulin dimers to the microtubule end, where a stabilizing cap forms. Below the cap, tubulin dimers are in GDP-bound state, owing to GTPase activity of alpha-tubulin. This Chlamydomonas reinhardtii (Chlamydomonas smithii) protein is Tubulin beta-1/beta-2 chain (TUBB1).